Consider the following 396-residue polypeptide: 1-deoxy-D-xylulose 5-phosphate reductoisomerase (396 aa).

Residues threonine 10, glycine 11, serine 12, isoleucine 13, asparagine 38, and asparagine 123 each coordinate NADPH. Position 124 (lysine 124) interacts with 1-deoxy-D-xylulose 5-phosphate. An NADPH-binding site is contributed by glutamate 125. Aspartate 149 lines the Mn(2+) pocket. Residues serine 150, glutamate 151, serine 185, and histidine 208 each coordinate 1-deoxy-D-xylulose 5-phosphate. Glutamate 151 contributes to the Mn(2+) binding site. Glycine 214 contacts NADPH. 4 residues coordinate 1-deoxy-D-xylulose 5-phosphate: serine 221, asparagine 226, lysine 227, and glutamate 230. Mn(2+) is bound at residue glutamate 230.

The protein belongs to the DXR family. The cofactor is Mg(2+). It depends on Mn(2+) as a cofactor.

The catalysed reaction is 2-C-methyl-D-erythritol 4-phosphate + NADP(+) = 1-deoxy-D-xylulose 5-phosphate + NADPH + H(+). The protein operates within isoprenoid biosynthesis; isopentenyl diphosphate biosynthesis via DXP pathway; isopentenyl diphosphate from 1-deoxy-D-xylulose 5-phosphate: step 1/6. Catalyzes the NADPH-dependent rearrangement and reduction of 1-deoxy-D-xylulose-5-phosphate (DXP) to 2-C-methyl-D-erythritol 4-phosphate (MEP). The sequence is that of 1-deoxy-D-xylulose 5-phosphate reductoisomerase from Shewanella pealeana (strain ATCC 700345 / ANG-SQ1).